A 251-amino-acid chain; its full sequence is Octanoyltransferase (251 aa).

Positions 56–241 (ADTGDEIWVV…NLDGASAAAD (186 aa)) constitute a BPL/LPL catalytic domain. Residues 96 to 103 (RGGQITYH), 168 to 170 (ALG), and 181 to 183 (GLS) each bind substrate. The active-site Acyl-thioester intermediate is cysteine 199.

This sequence belongs to the LipB family.

It localises to the cytoplasm. The catalysed reaction is octanoyl-[ACP] + L-lysyl-[protein] = N(6)-octanoyl-L-lysyl-[protein] + holo-[ACP] + H(+). It functions in the pathway protein modification; protein lipoylation via endogenous pathway; protein N(6)-(lipoyl)lysine from octanoyl-[acyl-carrier-protein]: step 1/2. Catalyzes the transfer of endogenously produced octanoic acid from octanoyl-acyl-carrier-protein onto the lipoyl domains of lipoate-dependent enzymes. Lipoyl-ACP can also act as a substrate although octanoyl-ACP is likely to be the physiological substrate. The chain is Octanoyltransferase from Burkholderia orbicola (strain AU 1054).